Consider the following 189-residue polypeptide: Peptidyl-tRNA hydrolase (189 aa).

Position 15 (Tyr15) interacts with tRNA. His20 acts as the Proton acceptor in catalysis. Residues Phe66, Asn68, and Asn114 each contribute to the tRNA site.

It belongs to the PTH family. In terms of assembly, monomer.

It is found in the cytoplasm. The catalysed reaction is an N-acyl-L-alpha-aminoacyl-tRNA + H2O = an N-acyl-L-amino acid + a tRNA + H(+). In terms of biological role, hydrolyzes ribosome-free peptidyl-tRNAs (with 1 or more amino acids incorporated), which drop off the ribosome during protein synthesis, or as a result of ribosome stalling. Its function is as follows. Catalyzes the release of premature peptidyl moieties from peptidyl-tRNA molecules trapped in stalled 50S ribosomal subunits, and thus maintains levels of free tRNAs and 50S ribosomes. The sequence is that of Peptidyl-tRNA hydrolase from Dichelobacter nodosus (strain VCS1703A).